A 128-amino-acid polypeptide reads, in one-letter code: Gas vesicle protein O (128 aa).

The disordered stretch occupies residues 1–49; the sequence is MANTPEDTQNTQNDSQNDSQNDSQKDTSARATSARAHQQPQEQPPSPMR. Low complexity predominate over residues 7 to 22; the sequence is DTQNTQNDSQNDSQND. Residues 29 to 41 are compositionally biased toward polar residues; it reads ARATSARAHQQPQ.

This sequence belongs to the gas vesicle GvpO family.

The protein resides in the gas vesicle. A minor component of the gas vesicle. May play a role in transcription and/or RNA stability and in GV assembly. Gas vesicles are hollow, gas filled proteinaceous nanostructures found in some microorganisms. It is not clear what function gas vesicles perform in soil bacteria. This is Gas vesicle protein O from Streptomyces sp. (strain CB03234).